The sequence spans 78 residues: Exodeoxyribonuclease 7 small subunit (78 aa).

This sequence belongs to the XseB family. Heterooligomer composed of large and small subunits.

It is found in the cytoplasm. The enzyme catalyses Exonucleolytic cleavage in either 5'- to 3'- or 3'- to 5'-direction to yield nucleoside 5'-phosphates.. Bidirectionally degrades single-stranded DNA into large acid-insoluble oligonucleotides, which are then degraded further into small acid-soluble oligonucleotides. In Synechococcus sp. (strain JA-3-3Ab) (Cyanobacteria bacterium Yellowstone A-Prime), this protein is Exodeoxyribonuclease 7 small subunit.